Here is a 349-residue protein sequence, read N- to C-terminus: Hyaluronidase Tab y 2.0101 (349 aa).

Residues 1–25 (MKLHQGLVCLSVLILLPTCILGDRK) form the signal peptide. Disulfide bonds link cysteine 37–cysteine 328 and cysteine 205–cysteine 216. N-linked (GlcNAc...) asparagine glycans are attached at residues asparagine 41, asparagine 81, asparagine 99, and asparagine 119. Glutamate 129 (proton donor) is an active-site residue. Residue asparagine 147 is glycosylated (N-linked (GlcNAc...) asparagine). 2 N-linked (GlcNAc...) asparagine glycosylation sites follow: asparagine 251 and asparagine 297.

Belongs to the glycosyl hydrolase 56 family. As to expression, expressed in salivary glands.

The protein resides in the secreted. The enzyme catalyses Random hydrolysis of (1-&gt;4)-linkages between N-acetyl-beta-D-glucosamine and D-glucuronate residues in hyaluronate.. Hydrolyzes high molecular weight hyaluronic acid to produce small oligosaccharides. The sequence is that of Hyaluronidase Tab y 2.0101 from Tabanus yao (Horsefly).